Here is a 421-residue protein sequence, read N- to C-terminus: C2 calcium-dependent domain-containing protein 4C (421 aa).

4 disordered regions span residues 13-97 (RGSG…AKLA), 119-140 (DWLSEEATDADPQAQGAMSLPS), 158-228 (HTRR…SPFG), and 250-303 (VSQL…TVHV). Residues 215-228 (ESDTGSSAESSPFG) are compositionally biased toward polar residues. 3 positions are modified to phosphoserine: serine 262, serine 264, and serine 273. The C2 domain occupies 305-421 (PRGSVRLLAE…LPLTSLLPFL (117 aa)).

This sequence belongs to the C2CD4 family.

This is C2 calcium-dependent domain-containing protein 4C (C2CD4C) from Homo sapiens (Human).